The following is a 113-amino-acid chain: Nucleoid-associated protein SAV_4556 (113 aa).

The protein belongs to the YbaB/EbfC family. In terms of assembly, homodimer.

Its subcellular location is the cytoplasm. The protein localises to the nucleoid. Its function is as follows. Binds to DNA and alters its conformation. May be involved in regulation of gene expression, nucleoid organization and DNA protection. This chain is Nucleoid-associated protein SAV_4556, found in Streptomyces avermitilis (strain ATCC 31267 / DSM 46492 / JCM 5070 / NBRC 14893 / NCIMB 12804 / NRRL 8165 / MA-4680).